Reading from the N-terminus, the 673-residue chain is Paralemmin-3 (673 aa).

2 coiled-coil regions span residues 4–49 and 75–101; these read SSLY…LRER and GQAQ…LQSA. Disordered regions lie at residues 49–78 and 99–213; these read RWLM…GQAQ and QSAS…GEAK. Over residues 123–137 the composition is skewed to polar residues; it reads LSQSIVEAGSVGQTD. A phosphoserine mark is found at Ser124 and Ser143. Position 151 is a phosphothreonine (Thr151). Ser155, Ser157, and Ser260 each carry phosphoserine. 2 disordered regions span residues 295–343 and 356–673; these read VPEV…SFIW and LLVE…CAVM. Residue Thr301 is modified to Phosphothreonine. Ser325 carries the phosphoserine modification. Positions 327 to 338 are enriched in gly residues; that stretch reads EGDGQGGSGGEE. Ser375 and Ser420 each carry phosphoserine. 2 stretches are compositionally biased toward basic and acidic residues: residues 392 to 477 and 487 to 532; these read EAEK…KRGA and GVEK…EKTQ. Residues Ser544 and Ser660 each carry the phosphoserine modification. S-palmitoyl cysteine attachment occurs at residues Cys667 and Cys669. Cys670 carries the cysteine methyl ester modification. Cys670 carries the S-farnesyl cysteine lipid modification. A propeptide spans 671 to 673 (removed in mature form); it reads AVM.

The protein belongs to the paralemmin family. Interacts with SIGIRR. In terms of processing, palmitoylated on Cys-667 and Cys-669 and prenylated on Cys-670; which is required for membrane association.

The protein resides in the cytoplasm. It is found in the cell membrane. In terms of biological role, ATP-binding protein, which may act as a adapter in the Toll-like receptor (TLR) signaling. The sequence is that of Paralemmin-3 (PALM3) from Homo sapiens (Human).